The following is a 186-amino-acid chain: Casparian strip membrane protein 5 (186 aa).

The Cytoplasmic portion of the chain corresponds to 1–23 (MEHGEISSKAPLVAPVAAGVNRA). The chain crosses the membrane as a helical span at residues 24 to 44 (VAVVDTFLRFIAIIGTIGSAI). At 45–73 (AMGTTNETLPFFTQFIQFEAKYSDLPSFT) the chain is on the extracellular side. A glycan (N-linked (GlcNAc...) asparagine) is linked at Asn50. Residues 74 to 94 (FFVAANAVVCTYLVLSIPLSI) form a helical membrane-spanning segment. Over 95–106 (VHILRPRARYSR) the chain is Cytoplasmic. A helical membrane pass occupies residues 107–127 (LFLVFFDTAMLALLTAGASAA). Residues 128–160 (AAIVYLAHKGNVRANWFSICQQFDSFCERISGS) lie on the Extracellular side of the membrane. The helical transmembrane segment at 161-181 (LIGSFAAMVLLVVLITLSAFA) threads the bilayer. At 182-186 (LARRH) the chain is on the cytoplasmic side.

This sequence belongs to the Casparian strip membrane proteins (CASP) family. Homodimer and heterodimers.

The protein resides in the cell membrane. Regulates membrane-cell wall junctions and localized cell wall deposition. Required for establishment of the Casparian strip membrane domain (CSD) and the subsequent formation of Casparian strips, a cell wall modification of the root endodermis that determines an apoplastic barrier between the intraorganismal apoplasm and the extraorganismal apoplasm and prevents lateral diffusion. This Oryza sativa subsp. japonica (Rice) protein is Casparian strip membrane protein 5.